Here is a 436-residue protein sequence, read N- to C-terminus: Arginine-hydroxylase NDUFAF5, mitochondrial (436 aa).

A mitochondrion-targeting transit peptide spans 1 to 25 (MLRTTFRKGFNLKCFSKDWNQTRQY). The tract at residues 365–436 (VTLSQQQQQQ…DEINKNKDDK (72 aa)) is disordered. The span at 369-380 (QQQQQQGIEPQQ) shows a compositional bias: low complexity. Composition is skewed to basic and acidic residues over residues 391-411 (PKTD…HFEK) and 421-436 (QNKE…KDDK).

This sequence belongs to the methyltransferase superfamily.

It is found in the mitochondrion. In terms of biological role, involved in the assembly of mitochondrial NADH:ubiquinone oxidoreductase complex (complex I, MT-ND1) at early stages. Probably acts as an arginine hydroxylase. May also have methyltransferase activity. In Dictyostelium discoideum (Social amoeba), this protein is Arginine-hydroxylase NDUFAF5, mitochondrial.